We begin with the raw amino-acid sequence, 494 residues long: MSEDSEVVLVGGGIMSLTLAAMLRELKPSLHISVYEMFEDLATESSSVWNNAGTGHQALCELNYTPQKEDGSIDVSKALKINQQFELSKEFWAYCIRKQILKGAHTFLNPVPHLSFVVDDIVPYLKKRYETLKDSPLFKNMIYTEDREQIKEWAPLLLEGRGETQKMAVTYMAGGSDVDFGEIARQFGEKLSQKEGFDVYTHHKVRDLTKEGNIWLLDVIDTKSYERKQVKAKFVFLGAGGGSFPLLQKSGIPEGRGYGGFPVGGLWLICNNREIIEKHNAKIYGKASIGDPPMSVPHLDTRIIRGKKELLFGPYAGFNTKFLKKGSFFDFPSSIRLNNFIPMIQAGIDNVPLTIYLIKQILSTDRMRMRKLEVFFPAAQFPDWNAQFAGQRVQVIKKDKNGRGSLQFGTEVITSSDGSLAALLGASPGASTVVDIMLEVLKRCFGDEMKTSAWQDKLAEMVPSYNRSLEENITHFNECRLKTAQTLHLPFDEI.

The protein belongs to the MQO family. It depends on FAD as a cofactor.

It carries out the reaction (S)-malate + a quinone = a quinol + oxaloacetate. Its pathway is carbohydrate metabolism; tricarboxylic acid cycle; oxaloacetate from (S)-malate (quinone route): step 1/1. The protein is Probable malate:quinone oxidoreductase of Helicobacter hepaticus (strain ATCC 51449 / 3B1).